The primary structure comprises 125 residues: MKSLYVAFGGALGAVSRYVISKFINSSFSFSFVPWGTIFVNVVGSFLLSFLMFLSISKTDISQSFILFFGTGFLGAFTTFSTFAYEFLSIFLTQPLRAIIYFIANIFLGFFAAILGMFLGRGRIL.

The next 3 helical transmembrane spans lie at 36-56 (GTIF…FLSI), 65-85 (FILF…TFAY), and 99-119 (IIYF…GMFL). Residues glycine 75 and threonine 78 each contribute to the Na(+) site.

Belongs to the fluoride channel Fluc/FEX (TC 1.A.43) family.

Its subcellular location is the cell inner membrane. The enzyme catalyses fluoride(in) = fluoride(out). Its activity is regulated as follows. Na(+) is not transported, but it plays an essential structural role and its presence is essential for fluoride channel function. Functionally, fluoride-specific ion channel. Important for reducing fluoride concentration in the cell, thus reducing its toxicity. The sequence is that of Fluoride-specific ion channel FluC from Thermosipho africanus (strain TCF52B).